The chain runs to 388 residues: MSELVNTSEVATVAVPNKNGKINLLDLNRQQMREFFLEMGEKPFRADQVMKWMYHYCSDNFDDMTDINKVLRNKLKDVAEIRAPEVVEEQRSADGTIKWAIAVGDQRVETVYIPEEDRATLCVSSQVGCALECKFCSTAQQGFNRNLRVSEIIGQVWRAAKIVGAAKVTGTRPITNVVMMGMGEPLLNLTNVVPAMEIMLDDFGFGLSKRRVTLSTSGVVPALDKLGDMIDVALAISLHAPNDEIRDEIVPVNKKYNIETFLAAVRRYLAKSNANQGRVTIEYVMLDHVNDETDHAHQLAELLKDTPCKINLIPWNPFPGAPYGRSSNSRIDRFSKVLMDYGFTTIVRKTRGDDIDAACGQLAGDVIDRTKRTLRKRMQGETIDVKAV.

Catalysis depends on Glu-109, which acts as the Proton acceptor. The region spanning 115–354 (EEDRATLCVS…TIVRKTRGDD (240 aa)) is the Radical SAM core domain. An intrachain disulfide couples Cys-122 to Cys-359. Cys-129, Cys-133, and Cys-136 together coordinate [4Fe-4S] cluster. S-adenosyl-L-methionine-binding positions include 183 to 184 (GE), Ser-215, 237 to 239 (SLH), and Asn-316. The S-methylcysteine intermediate role is filled by Cys-359.

Belongs to the radical SAM superfamily. RlmN family. The cofactor is [4Fe-4S] cluster.

It localises to the cytoplasm. The catalysed reaction is adenosine(2503) in 23S rRNA + 2 reduced [2Fe-2S]-[ferredoxin] + 2 S-adenosyl-L-methionine = 2-methyladenosine(2503) in 23S rRNA + 5'-deoxyadenosine + L-methionine + 2 oxidized [2Fe-2S]-[ferredoxin] + S-adenosyl-L-homocysteine. The enzyme catalyses adenosine(37) in tRNA + 2 reduced [2Fe-2S]-[ferredoxin] + 2 S-adenosyl-L-methionine = 2-methyladenosine(37) in tRNA + 5'-deoxyadenosine + L-methionine + 2 oxidized [2Fe-2S]-[ferredoxin] + S-adenosyl-L-homocysteine. Functionally, specifically methylates position 2 of adenine 2503 in 23S rRNA and position 2 of adenine 37 in tRNAs. m2A2503 modification seems to play a crucial role in the proofreading step occurring at the peptidyl transferase center and thus would serve to optimize ribosomal fidelity. The sequence is that of Dual-specificity RNA methyltransferase RlmN from Enterobacter sp. (strain 638).